Reading from the N-terminus, the 556-residue chain is Glutamine--tRNA ligase (556 aa).

The 'HIGH' region motif lies at 34 to 44; it reads PEPNGYLHIGH. ATP contacts are provided by residues 35–37 and 41–47; these read EPN and HIGHAKS. 2 residues coordinate L-glutamine: aspartate 67 and tyrosine 212. ATP is bound by residues threonine 231, 263–264, and 271–273; these read RL and MSK. Residues 270 to 274 carry the 'KMSKS' region motif; that stretch reads VMSKR.

This sequence belongs to the class-I aminoacyl-tRNA synthetase family. Monomer.

It localises to the cytoplasm. The enzyme catalyses tRNA(Gln) + L-glutamine + ATP = L-glutaminyl-tRNA(Gln) + AMP + diphosphate. The sequence is that of Glutamine--tRNA ligase from Nitrosomonas europaea (strain ATCC 19718 / CIP 103999 / KCTC 2705 / NBRC 14298).